The sequence spans 177 residues: Cell division inhibitor SulA (177 aa).

The ftsZ binding stretch occupies residues 112–118; that stretch reads ALASGNY. The tract at residues 170–177 is lon protease binding; sequence KIHSIHYH.

Belongs to the SulA family. Interacts with FtsZ. In terms of processing, is rapidly cleaved and degraded by the Lon protease once DNA damage is repaired.

Functionally, component of the SOS system and an inhibitor of cell division. Accumulation of SulA causes rapid cessation of cell division and the appearance of long, non-septate filaments. In the presence of GTP, binds a polymerization-competent form of FtsZ in a 1:1 ratio, thus inhibiting FtsZ polymerization and therefore preventing it from participating in the assembly of the Z ring. This mechanism prevents the premature segregation of damaged DNA to daughter cells during cell division. This Photorhabdus laumondii subsp. laumondii (strain DSM 15139 / CIP 105565 / TT01) (Photorhabdus luminescens subsp. laumondii) protein is Cell division inhibitor SulA.